The sequence spans 292 residues: Tumor necrosis factor alpha-induced protein 8-like protein 3 (292 aa).

Residues 81–107 (DAQPAARSMDSDSGEQSEGEPVTAAGP) are disordered. Positions 109–292 (VFSSKSLALQ…INKLLDEKVL (184 aa)) are binding to phosphoinositides.

Belongs to the TNFAIP8 family. Widely expressed (at protein level). Highly expressed in most carcinoma cell lines.

The protein resides in the cytoplasm. Its subcellular location is the cell membrane. Its function is as follows. Acts as a lipid transfer protein. Preferentially captures and shuttles two lipid second messengers, i.e., phosphatidylinositol 4,5- bisphosphate and phosphatidylinositol 3,4,5-trisphosphate and increases their levels in the plasma membrane. Additionally, may also function as a lipid-presenting protein to enhance the activity of the PI3K-AKT and MEK-ERK pathways. May act as a regulator of tumorigenesis through its activation of phospholipid signaling. This chain is Tumor necrosis factor alpha-induced protein 8-like protein 3 (TNFAIP8L3), found in Homo sapiens (Human).